The chain runs to 174 residues: Methylamine utilization protein MauL (174 aa).

It functions in the pathway one-carbon metabolism; methylamine degradation. Its function is as follows. Probably involved in TTQ prosthetic group biosynthesis. This Methylophilus methylotrophus (Bacterium W3A1) protein is Methylamine utilization protein MauL (mauL).